A 356-amino-acid chain; its full sequence is Tyrosine recombinase XerS (356 aa).

A Core-binding (CB) domain is found at 16–121; it reads IMPWYVLDYY…ALSSLYKYLT (106 aa). The region spanning 169-354 is the Tyr recombinase domain; it reads AFLDYVDKEY…VNDEQKNALD (186 aa). Residues Arg-210, Lys-234, His-306, Arg-309, and His-332 contribute to the active site. Tyr-341 (O-(3'-phospho-DNA)-tyrosine intermediate) is an active-site residue.

It belongs to the 'phage' integrase family. XerS subfamily.

The protein resides in the cytoplasm. FtsK is required for recombination. Functionally, site-specific tyrosine recombinase, which acts by catalyzing the cutting and rejoining of the recombining DNA molecules. Essential to convert dimers of the bacterial chromosome into monomers to permit their segregation at cell division. The protein is Tyrosine recombinase XerS of Streptococcus pyogenes serotype M18 (strain MGAS8232).